The following is a 395-amino-acid chain: Argininosuccinate synthase (395 aa).

8–16 (AYSGGLDTS) provides a ligand contact to ATP. Residue Tyr-86 coordinates L-citrulline. An ATP-binding site is contributed by Gly-116. L-aspartate is bound by residues Thr-118, Asn-122, and Asp-123. Asn-122 is a binding site for L-citrulline. 5 residues coordinate L-citrulline: Arg-126, Ser-173, Ser-182, Glu-257, and Tyr-269.

Belongs to the argininosuccinate synthase family. Type 1 subfamily. Homotetramer.

It localises to the cytoplasm. It carries out the reaction L-citrulline + L-aspartate + ATP = 2-(N(omega)-L-arginino)succinate + AMP + diphosphate + H(+). It participates in amino-acid biosynthesis; L-arginine biosynthesis; L-arginine from L-ornithine and carbamoyl phosphate: step 2/3. The sequence is that of Argininosuccinate synthase from Methanocaldococcus jannaschii (strain ATCC 43067 / DSM 2661 / JAL-1 / JCM 10045 / NBRC 100440) (Methanococcus jannaschii).